The chain runs to 294 residues: Octopine-binding periplasmic protein (294 aa).

Residues 1–20 (MRLKSIMCAALFVVAGQAAA) form the signal peptide. The cysteines at positions 57 and 64 are disulfide-linked.

It belongs to the bacterial solute-binding protein 3 family.

The protein localises to the periplasm. Functionally, component of the octopine active transport system probably consisting of four subunits: Q, M, P and T. The polypeptide is Octopine-binding periplasmic protein (occT) (Rhizobium meliloti (Ensifer meliloti)).